Reading from the N-terminus, the 457-residue chain is MGPVMPASKKAESSGISVSSGLSQRYRGSGFSKALQEDDDLDFPLPDIRLEEGAMEDEELTNLNWLHESKNLLKSFGESVLRSVSPVQDLDDDTPPSPAHSDMPYDARQNPNCKPPYSFSCLIFMAIEDSPTKRLPVKDIYNWILEHFPYFANAPTGWKNSVRHNLSLNKCFKKVDKERSQSIGKGSLWCIDPEYRQNLIQALKKTPYHPPPTPQAYQSTSGPPIWPGSTFFKRNGALLQVSPGVIQNGARVLSRGLFPGVRPLPITPIGMTAAIRNSITSCRMRTESEPPCGSPVVSGDPKEDHNYSSAKSSTARSTSPTSDSISSSSSSADDHYEFATKGSQEGSEGSFQSHESHSEPEEEDRKPSPKEGKDALGDSGYASQHKKRQHFAKARKVPSDTLPLKKRRTEKPPESDDEEMKEAAGSLLHLAGIRSCLNNITNRTAKGQKEQKETAKN.

The disordered stretch occupies residues 1–24 (MGPVMPASKKAESSGISVSSGLSQ). Positions 13–23 (SSGISVSSGLS) are enriched in low complexity. A phosphoserine mark is found at serine 83, serine 85, and serine 97. The tract at residues 86–109 (PVQDLDDDTPPSPAHSDMPYDARQ) is disordered. The segment at residues 114-210 (KPPYSFSCLI…QALKKTPYHP (97 aa)) is a DNA-binding region (fork-head). A disordered region spans residues 285-422 (RTESEPPCGS…PESDDEEMKE (138 aa)). Low complexity-rich tracts occupy residues 308-331 (SSAK…SSSS) and 342-353 (GSQEGSEGSFQS). The span at 354 to 376 (HESHSEPEEEDRKPSPKEGKDAL) shows a compositional bias: basic and acidic residues. Positions 384-396 (QHKKRQHFAKARK) are enriched in basic residues. Position 415 is a phosphoserine (serine 415).

Interacts through its C-terminus with the C-terminus of SNW1/SKIP.

The protein localises to the nucleus. Its function is as follows. Acts as a transcriptional repressor. May be involved in DNA damage-inducible cell cycle arrests (checkpoints). This Mus musculus (Mouse) protein is Forkhead box protein N3 (Foxn3).